Here is a 1537-residue protein sequence, read N- to C-terminus: MGEKLELRLKSPVGAEPAVYPWPLPVYDKHHDAAHEIIETIRWVCEEIPDLKLAMENYVLIDYDTKSFESMQRLCDKYNRAIDSIHQLWKGTTQPMKLNTRPSTGLLRHILQQVYNHSVTDPEKLNNYEPFSPEVYGETSFDLVAQMIDEIKMTDDDLFVDLGSGVGQVVLQVAAATNCKHHYGVEKADIPAKYAETMDREFRKWMKWYGKKHAEYTLERGDFLSEEWRERIANTSVIFVNNFAFGPEVDHQLKERFANMKEGGRIVSSKPFAPLNFRINSRNLSDIGTIMRVVELSPLKGSVSWTGKPVSYYLHTIDRTILENYFSSLKNPKLREEQEAARRRQQRESKSNAATPTKGPEGKVAGPADAPMDSGAEEEKAGAATVKKPSPSKARKKKLNKKGRKMAGRKRGRPKKMNTANPERKPKKNQTALDALHAQTVSQTAASSPQDAYRSPHSPFYQLPPSVQRHSPNPLLVAPTPPALQKLLESFKIQYLQFLAYTKTPQYKASLQELLGQEKEKNAQLLGAAQQLLSHCQAQKEEIRRLFQQKLDELGVKALTYNDLIQAQKEISAHNQQLREQSEQLEQDNRALRGQSLQLLKARCEELQLDWATLSLEKLLKEKQALKSQISEKQRHCLELQISIVELEKSQRQQELLQLKSCVPPDDALSLHLRGKGALGRELEPDASRLHLELDCTKFSLPHLSSMSPELSMNGQAAGYELCGVLSRPSSKQNTPQYLASPLDQEVVPCTPSHVGRPRLEKLSGLAAPDYTRLSPAKIVLRRHLSQDHTVPGRPAASELHSRAEHTKENGLPYQSPSVPGSMKLSPQDPRPLSPGALQLAGEKSSEKGLRERAYGSSGELITSLPISIPLSTVQPNKLPVSIPLASVVLPSRAERARSTPSPVLQPRDPSSTLEKQIGANAHGAGSRSLALAPAGFSYAGSVAISGALAGSPASLTPGAEPATLDESSSSGSLFATVGSRSSTPQHPLLLAQPRNSLPASPAHQLSSSPRLGGAAQGPLPEASKGDLPSDSGFSDPESEAKRRIVFTITTGAGSAKQSPSSKHSPLTASARGDCVPSHGQDSRRRGRRKRASAGTPSLSAGVSPKRRALPSVAGLFTQPSGSPLNLNSMVSNINQPLEITAISSPETSLKSSPVPYQDHDQPPVLKKERPLSQTNGAHYSPLTSDEEPGSEDEPSSARIERKIATISLESKSPPKTLENGGGLAGRKPAPAGEPVNSSKWKSTFSPISDIGLAKSADSPLQASSALSQNSLFTFRPALEEPSADAKLAAHPRKGFPGSLSGADGLSPGTNPANGCTFGGGLAADLSLHSFSDGASLPHKGPEAAGLSSPLSFPSQRGKEGSDANPFLSKRQLDGLAGLKGEGSRGKEAGEGGLPLCGPTDKTPLLSGKAAKARDREVDLKNGHNLFISAAAVPPGSLLSGPGLAPAASSAGGAASSAQTHRSFLGPFPPGPQFALGPMSLQANLGSVAGSSVLQSLFSSVPAAAGLVHVSSAATRLTNSHAMGSFSGVAGGTVGGN.

In terms of domain architecture, DOT1 spans 16-330; that stretch reads EPAVYPWPLP…ILENYFSSLK (315 aa). S-adenosyl-L-methionine-binding positions include 136-139, 159-168, E186, and 222-223; these read YGET, FVDLGSGVGQ, and DF. S297 carries the post-translational modification Phosphoserine. Residues 334 to 350 are compositionally biased toward basic and acidic residues; that stretch reads LREEQEAARRRQQRESK. A disordered region spans residues 334-467; sequence LREEQEAARR…SPFYQLPPSV (134 aa). S374 carries the post-translational modification Phosphoserine. The required for interaction with nucleosomes and DNA stretch occupies residues 391–416; that stretch reads PSKARKKKLNKKGRKMAGRKRGRPKK. Over residues 393-416 the composition is skewed to basic residues; sequence KARKKKLNKKGRKMAGRKRGRPKK. Polar residues predominate over residues 439–450; sequence QTVSQTAASSPQ. S448 and S471 each carry phosphoserine. T480 is modified (phosphothreonine). Phosphoserine occurs at positions 775 and 786. 4 disordered regions span residues 785–853, 893–912, 957–1128, and 1145–1243; these read LSQD…LRER, RAER…DPSS, TPGA…LNLN, and SPET…KWKS. Residues 800–809 show a composition bias toward basic and acidic residues; it reads LHSRAEHTKE. The residue at position 826 (S826) is a Phosphoserine. The residue at position 834 (S834) is a Phosphoserine; by MAPK11. A compositionally biased stretch (basic and acidic residues) spans 844 to 853; the sequence is KSSEKGLRER. Composition is skewed to polar residues over residues 899–912, 966–986, and 994–1010; these read STPS…DPSS, DESS…STPQ, and PRNS…SSSP. Residue T900 is modified to Phosphothreonine; by MAPK11. The residue at position 902 (S902) is a Phosphoserine; by MAPK11. T984 is modified (phosphothreonine; by MAPK11). The residue at position 997 (S997) is a Phosphoserine. Phosphoserine; by MAPK11 occurs at positions 1001 and 1009. S1035 is subject to Phosphoserine. Over residues 1048–1068 the composition is skewed to polar residues; sequence TITTGAGSAKQSPSSKHSPLT. S1093 is modified (phosphoserine). The residue at position 1104 (S1104) is a Phosphoserine; by MAPK11. Polar residues predominate over residues 1118–1128; the sequence is TQPSGSPLNLN. Residues 1158 to 1171 show a composition bias toward basic and acidic residues; the sequence is QDHDQPPVLKKERP. Residues 1172–1184 show a composition bias toward polar residues; that stretch reads LSQTNGAHYSPLT. A compositionally biased stretch (acidic residues) spans 1185 to 1195; the sequence is SDEEPGSEDEP. Phosphoserine occurs at positions 1213 and 1246. The interval 1334–1410 is disordered; sequence GASLPHKGPE…DKTPLLSGKA (77 aa).

The protein belongs to the class I-like SAM-binding methyltransferase superfamily. DOT1 family. As to quaternary structure, interacts with MLLT10.

It is found in the nucleus. It carries out the reaction L-lysyl(79)-[histone H3] + 3 S-adenosyl-L-methionine = N(6),N(6),N(6)-trimethyl-L-lysyl(79)-[histone H3] + 3 S-adenosyl-L-homocysteine + 3 H(+). Histone methyltransferase. Methylates 'Lys-79' of histone H3. Nucleosomes are preferred as substrate compared to free histones. Binds to DNA. The polypeptide is Histone-lysine N-methyltransferase, H3 lysine-79 specific (Homo sapiens (Human)).